Reading from the N-terminus, the 236-residue chain is Biosynthetic peptidoglycan transglycosylase (236 aa).

A helical membrane pass occupies residues 20–40 (GLVVAAVLALIPTMLTFLYLP).

It belongs to the glycosyltransferase 51 family.

The protein localises to the cell inner membrane. The enzyme catalyses [GlcNAc-(1-&gt;4)-Mur2Ac(oyl-L-Ala-gamma-D-Glu-L-Lys-D-Ala-D-Ala)](n)-di-trans,octa-cis-undecaprenyl diphosphate + beta-D-GlcNAc-(1-&gt;4)-Mur2Ac(oyl-L-Ala-gamma-D-Glu-L-Lys-D-Ala-D-Ala)-di-trans,octa-cis-undecaprenyl diphosphate = [GlcNAc-(1-&gt;4)-Mur2Ac(oyl-L-Ala-gamma-D-Glu-L-Lys-D-Ala-D-Ala)](n+1)-di-trans,octa-cis-undecaprenyl diphosphate + di-trans,octa-cis-undecaprenyl diphosphate + H(+). Its pathway is cell wall biogenesis; peptidoglycan biosynthesis. Peptidoglycan polymerase that catalyzes glycan chain elongation from lipid-linked precursors. In Mesorhizobium japonicum (strain LMG 29417 / CECT 9101 / MAFF 303099) (Mesorhizobium loti (strain MAFF 303099)), this protein is Biosynthetic peptidoglycan transglycosylase.